We begin with the raw amino-acid sequence, 454 residues long: Allantoinase (454 aa).

Positions 60, 62, 147, 183, 239, and 312 each coordinate Zn(2+). N6-carboxylysine is present on K147.

Belongs to the metallo-dependent hydrolases superfamily. Allantoinase family. As to quaternary structure, homotetramer. Zn(2+) is required as a cofactor. Post-translationally, carboxylation allows a single lysine to coordinate two zinc ions.

The enzyme catalyses (S)-allantoin + H2O = allantoate + H(+). It participates in nitrogen metabolism; (S)-allantoin degradation; allantoate from (S)-allantoin: step 1/1. Its function is as follows. Catalyzes the conversion of allantoin (5-ureidohydantoin) to allantoic acid by hydrolytic cleavage of the five-member hydantoin ring. This is Allantoinase from Rubrobacter xylanophilus (strain DSM 9941 / JCM 11954 / NBRC 16129 / PRD-1).